The chain runs to 639 residues: Chaperone protein DnaK (639 aa).

Threonine 198 carries the phosphothreonine; by autocatalysis modification. A disordered region spans residues 602–639 (QAKSQAQGGDNADAGKQANATADDVVDAEFEEVKDDKK). The span at 625–639 (DVVDAEFEEVKDDKK) shows a compositional bias: acidic residues.

It belongs to the heat shock protein 70 family.

Acts as a chaperone. This Shewanella baltica (strain OS155 / ATCC BAA-1091) protein is Chaperone protein DnaK.